A 292-amino-acid chain; its full sequence is Elongation factor Ts (292 aa).

The involved in Mg(2+) ion dislocation from EF-Tu stretch occupies residues 79-82 (TDFV).

This sequence belongs to the EF-Ts family.

The protein resides in the cytoplasm. In terms of biological role, associates with the EF-Tu.GDP complex and induces the exchange of GDP to GTP. It remains bound to the aminoacyl-tRNA.EF-Tu.GTP complex up to the GTP hydrolysis stage on the ribosome. This chain is Elongation factor Ts, found in Staphylococcus haemolyticus (strain JCSC1435).